The chain runs to 588 residues: Succinate dehydrogenase flavoprotein subunit (588 aa).

Residues 14-19 (GAGGAG), 37-52 (SKVF…AQGG), and aspartate 221 contribute to the FAD site. The residue at position 45 (histidine 45) is a Tele-8alpha-FAD histidine. Positions 242 and 254 each coordinate substrate. Lysine 267 is subject to N6-acetyllysine. The active-site Proton acceptor is arginine 286. Residue histidine 354 coordinates substrate. Position 388 (glutamate 388) interacts with FAD. Arginine 399 provides a ligand contact to substrate. Position 404–405 (404–405 (SL)) interacts with FAD.

It belongs to the FAD-dependent oxidoreductase 2 family. FRD/SDH subfamily. In terms of assembly, part of an enzyme complex containing four subunits: a flavoprotein, an iron-sulfur, cytochrome b-556, and a hydrophobic anchor protein. The complex forms trimers. FAD serves as cofactor.

It is found in the cell inner membrane. It carries out the reaction a quinone + succinate = fumarate + a quinol. It participates in carbohydrate metabolism; tricarboxylic acid cycle; fumarate from succinate (bacterial route): step 1/1. In terms of biological role, two distinct, membrane-bound, FAD-containing enzymes are responsible for the catalysis of fumarate and succinate interconversion; the fumarate reductase is used in anaerobic growth, and the succinate dehydrogenase is used in aerobic growth. This is Succinate dehydrogenase flavoprotein subunit (sdhA) from Escherichia coli O157:H7.